We begin with the raw amino-acid sequence, 269 residues long: Proline-rich protein 7 (269 aa).

At 1 to 9 (MVMSQGTYT) the chain is on the extracellular side. The segment at 1 to 44 (MVMSQGTYTFLTCFAGFWLIWGLIVLLCCFCSFLRRRLKRRQEE) is required for interaction with NMDA receptors. Residues 2–39 (VMSQGTYTFLTCFAGFWLIWGLIVLLCCFCSFLRRRLK) form a required for membrane localization region. The chain crosses the membrane as a helical; Signal-anchor for type III membrane protein span at residues 10–30 (FLTCFAGFWLIWGLIVLLCCF). Over 31 to 269 (CSFLRRRLKR…IPLFGRTTAV (239 aa)) the chain is Cytoplasmic. The residue at position 64 (Ser-64) is a Phosphoserine. Disordered regions lie at residues 64–83 (SLAGSPPGLAPPPPPHRSRL) and 98–128 (LLHHGPAQPHAHPHPHHHALPHPPPSHLSVP). Residues 108-117 (AHPHPHHHAL) are compositionally biased toward basic residues. Residues 118–128 (PHPPPSHLSVP) show a composition bias toward pro residues. The interval 146 to 166 (PCYEEAVLMAEPPPPYSEVLT) is required for internalization. Residues 146 to 269 (PCYEEAVLMA…IPLFGRTTAV (124 aa)) are required for apoptosis induction. Residues 267-269 (TAV) carry the PDZ-binding motif.

In terms of assembly, forms a complex with NMDA receptor zeta subunit GRIN1 and epsilon subunit GRIN2B. Interacts with GRIN2B. Interacts with GRIN1; the interaction is reduced upon NMDA receptor activity. Found in a postsynaptic membrane complex with DLG4 and GRIN1. Interacts with DLG4 (via PDZ3 domain and to lesser degree via PDZ2 domain). Interacts with FBXW7. Found in a complex with JUN and FBXW7. Interacts with JUN and FBXW7; the interaction inhibits ubiquitination-mediated JUN degradation promoting its phosphorylation and transcriptional activity. Interacts with SRC. In terms of processing, palmitoylated. Post-translationally, tyrosine phosphorylated, possibly by SRC. In terms of tissue distribution, expressed in brain. Expressed in the cerebral cortex and especially in hippocampal neural cells (at protein level).

The protein resides in the cell membrane. Its subcellular location is the postsynaptic cell membrane. It is found in the postsynaptic density membrane. The protein localises to the cytoplasm. It localises to the perinuclear region. The protein resides in the synapse. Its subcellular location is the cell projection. It is found in the dendrite. The protein localises to the nucleus. Its function is as follows. Acts as a synapse-to-nucleus messenger to promote NMDA receptor-mediated excitotoxicity in neurons in a JUN-dependent manner. Inhibits ubiquitination-mediated degradation and promotes phosphorylation and transcriptional activity of transcription factor JUN. Might play a redundant role in the regulation of T cell receptor signaling. Might promote apoptosis in T cells. This chain is Proline-rich protein 7 (Prr7), found in Rattus norvegicus (Rat).